Reading from the N-terminus, the 1525-residue chain is Dicer-like protein 1 (1525 aa).

Over residues 37-52 (DLQEDDGSSDESDNDE) the composition is skewed to acidic residues. Residues 37–65 (DLQEDDGSSDESDNDEREDHSKTGVSQQR) form a disordered region. One can recognise a Helicase ATP-binding domain in the interval 124 to 305 (LFERAKVQNT…DEATRLEKLL (182 aa)). 137–144 (LDTGSGKT) lines the ATP pocket. Residues 250 to 253 (DEAH) carry the DEAH box motif. In terms of domain architecture, Helicase C-terminal spans 439–605 (QLSPKVQVLR…SFCRTLPEDR (167 aa)). The 91-residue stretch at 641–731 (ATAILARYAS…NSIYHRRLPA (91 aa)) folds into the Dicer dsRNA-binding fold domain. Residues 881-1009 (ESLTYVRDND…ICIEPLKVSA (129 aa)) form the PAZ domain. RNase III domains are found at residues 1032–1192 (LISL…LSGG) and 1243–1394 (SRKI…VDSD). Positions 1283, 1380, and 1383 each coordinate Mg(2+). Positions 1428-1496 (TFLHNRLTNE…SEKALAVLDE (69 aa)) constitute a DRBM domain. Positions 1440, 1467, 1508, and 1510 each coordinate Zn(2+).

The protein belongs to the helicase family. Dicer subfamily. Mg(2+) is required as a cofactor. The cofactor is Mn(2+).

Functionally, dicer-like endonuclease involved in cleaving double-stranded RNA in the RNA interference (RNAi) pathway. Produces 21 to 25 bp dsRNAs (siRNAs) which target the selective destruction of homologous RNAs leading to sequence-specific suppression of gene expression, called post-transcriptional gene silencing (PTGS). Part of a broad host defense response against viral infection and transposons. The sequence is that of Dicer-like protein 1 (dcl1) from Aspergillus niger (strain ATCC MYA-4892 / CBS 513.88 / FGSC A1513).